A 601-amino-acid chain; its full sequence is Phosphomethylpyrimidine synthase (601 aa).

Residues N224, M253, Y282, H318, 338-340 (SRG), 379-382 (DGLR), and E418 each bind substrate. H422 serves as a coordination point for Zn(2+). Y445 is a substrate binding site. Position 486 (H486) interacts with Zn(2+). [4Fe-4S] cluster-binding residues include C566, C569, and C574.

This sequence belongs to the ThiC family. In terms of assembly, homodimer. The cofactor is [4Fe-4S] cluster.

The catalysed reaction is 5-amino-1-(5-phospho-beta-D-ribosyl)imidazole + S-adenosyl-L-methionine = 4-amino-2-methyl-5-(phosphooxymethyl)pyrimidine + CO + 5'-deoxyadenosine + formate + L-methionine + 3 H(+). It participates in cofactor biosynthesis; thiamine diphosphate biosynthesis. Its function is as follows. Catalyzes the synthesis of the hydroxymethylpyrimidine phosphate (HMP-P) moiety of thiamine from aminoimidazole ribotide (AIR) in a radical S-adenosyl-L-methionine (SAM)-dependent reaction. In Xylella fastidiosa (strain 9a5c), this protein is Phosphomethylpyrimidine synthase.